The chain runs to 487 residues: E3 ubiquitin-protein ligase TRIM50 (487 aa).

The RING-type zinc-finger motif lies at 16 to 57 (CPICLEVFKEPLMLQCGHSYCKGCLVSLSCHLDAELRCPVCR). The segment at 84-125 (PEPKVCVHHRNPLSLFCEKDQELICGLCGLLGSHQHHPVTPV) adopts a B box-type zinc-finger fold. Zn(2+)-binding residues include cysteine 89, histidine 92, cysteine 111, and histidine 117. Coiled coils occupy residues 125-169 (VSTV…NESD) and 204-235 (LVASLDMQLEQAQGTRERLAQAECVLEQFGNE). The B30.2/SPRY domain maps to 276 to 475 (DIKLTVWKRL…LPMVLPPPSG (200 aa)). Lysine 373 carries the post-translational modification N6-acetyllysine. The disordered stretch occupies residues 468 to 487 (MVLPPPSGPGPLSPEQPTKL). The segment covering 469-481 (VLPPPSGPGPLSP) has biased composition (pro residues).

It belongs to the TRIM/RBCC family. As to quaternary structure, can form dimers and trimers. Interacts with several E2 ubiquitin-conjugating enzymes, including UBE2L6, UBE2E1, UBE2E3. No interaction with UBE2H. Interacts with BECN1. Interacts with SQSTM1. Interacts with NLRP3. In terms of processing, auto-ubiquitinated. Acetylated by EP300 and KAT2B. HDAC6 drives TRIM50 deacetylation. Acetylation antagonizes with TRIM50 ubiquitination.

It localises to the cytoplasm. It carries out the reaction S-ubiquitinyl-[E2 ubiquitin-conjugating enzyme]-L-cysteine + [acceptor protein]-L-lysine = [E2 ubiquitin-conjugating enzyme]-L-cysteine + N(6)-ubiquitinyl-[acceptor protein]-L-lysine.. Functionally, E3 ubiquitin-protein ligase that ubiquitinates Beclin-1/BECN1 in a 'Lys-63'-dependent manner enhancing its binding to ULK1. In turn, promotes starvation-induced autophagy activation. Also interacts with p62/SQSTM1 protein and thereby induces the formation and the autophagy clearance of aggresome-associated polyubiquitinated proteins through HDAC6 interaction. Also promotes NLRP3 inflammasome activation by directly inducing NLRP3 oligomerization independent of its E3 ligase function. The sequence is that of E3 ubiquitin-protein ligase TRIM50 from Homo sapiens (Human).